The chain runs to 258 residues: Snake venom serine proteinase 5 (258 aa).

The first 18 residues, 1-18 (MVLIRVLANLLILQLSYA), serve as a signal peptide directing secretion. The propeptide occupies 19 to 24 (QKSSEL). The Peptidase S1 domain occupies 25–249 (VVGGDECNIN…YNDWIQSIIA (225 aa)). Cystine bridges form between Cys31–Cys163, Cys50–Cys66, Cys98–Cys256, Cys142–Cys210, Cys174–Cys189, and Cys200–Cys225. N-linked (GlcNAc...) asparagine glycosylation is present at Asn44. Active-site charge relay system residues include His65 and Asp110. Ser204 (charge relay system) is an active-site residue.

This sequence belongs to the peptidase S1 family. Snake venom subfamily. As to quaternary structure, monomer. Expressed by the venom gland.

The protein resides in the secreted. In terms of biological role, snake venom serine protease that may act in the hemostasis system of the prey. This chain is Snake venom serine proteinase 5, found in Crotalus adamanteus (Eastern diamondback rattlesnake).